Here is a 315-residue protein sequence, read N- to C-terminus: Glutaminase (315 aa).

The substrate site is built by S70, N120, E166, N173, Y197, Y249, and V267.

The protein belongs to the glutaminase family. As to quaternary structure, homotetramer.

It carries out the reaction L-glutamine + H2O = L-glutamate + NH4(+). In Sinorhizobium fredii (strain NBRC 101917 / NGR234), this protein is Glutaminase.